The primary structure comprises 218 residues: Oxygen regulatory protein NreC (218 aa).

A Response regulatory domain is found at 2–119; that stretch reads KIVIADDHAV…QLILAVRTVY (118 aa). Asp-53 bears the 4-aspartylphosphate mark. Positions 149 to 214 constitute an HTH luxR-type domain; it reads SSDPFKILSK…ELVEYALKKK (66 aa). The H-T-H motif DNA-binding region spans 173–192; the sequence is NKDIAEKLFVSVKTVEAHKT.

Post-translationally, phosphorylated by NreB.

The protein resides in the cytoplasm. Member of the two-component regulatory system NreB/NreC involved in the control of dissimilatory nitrate/nitrite reduction in response to oxygen. Phosphorylated NreC binds to a GC-rich palindromic sequence at the promoters of the nitrate (narGHJI) and nitrite (nir) reductase operons, as well as the putative nitrate transporter gene narT, and activates their expression. This chain is Oxygen regulatory protein NreC (nreC), found in Staphylococcus epidermidis (strain ATCC 35984 / DSM 28319 / BCRC 17069 / CCUG 31568 / BM 3577 / RP62A).